Here is a 222-residue protein sequence, read N- to C-terminus: U-scoloptoxin(11)-Sm5a (222 aa).

The protein belongs to the scoloptoxin-11 family. Post-translationally, contains 8 disulfide bonds. Expressed by the venom gland.

Its subcellular location is the secreted. The polypeptide is U-scoloptoxin(11)-Sm5a (Scolopendra morsitans (Tanzanian blue ringleg centipede)).